A 391-amino-acid polypeptide reads, in one-letter code: Mannose-6-phosphate isomerase (391 aa).

Zn(2+) is bound by residues Q97, H99, E134, and H255. The active site involves R274. An N6-acetyllysine modification is found at K280.

Belongs to the mannose-6-phosphate isomerase type 1 family. The cofactor is Zn(2+).

The protein localises to the cytoplasm. It catalyses the reaction D-mannose 6-phosphate = D-fructose 6-phosphate. In terms of biological role, involved in the conversion of glucose to GDP-L-fucose, which can be converted to L-fucose, a capsular polysaccharide. This is Mannose-6-phosphate isomerase (manA) from Escherichia coli (strain K12).